Reading from the N-terminus, the 61-residue chain is Large ribosomal subunit protein bL32 (61 aa).

The tract at residues 1–20 (MAVQKSKPSRAKRGKRRSHD) is disordered. The segment covering 7-19 (KPSRAKRGKRRSH) has biased composition (basic residues).

It belongs to the bacterial ribosomal protein bL32 family.

This is Large ribosomal subunit protein bL32 from Buchnera aphidicola subsp. Cinara cedri (strain Cc).